Consider the following 38-residue polypeptide: Small toxic protein BsrG (38 aa).

A helical membrane pass occupies residues 11–31; it reads INFGGLILNTVLLIFNIMMIV.

The protein resides in the cell membrane. Its function is as follows. Toxic component of a type I toxin-antitoxin (TA) system; expression in the absence of cognate antisense antitoxin SR4 RNA leads to cell lysis. Induced expression causes membrane invaginations that dislocate the cell wall synthesis machinery, leading to eventual death. Unlike many type I TA systems it does not form pores. Base pairing occurs between the 3' UTRs of bsrG mRNA and SR4 RNA, which leads to initiation of degradation by RNase III (rnc) followed by the action of RNase Y (rny) and RNase R (rnr). Not toxic when expressed in E.coli. When induced during logarithmic growth it only slowly exerts its toxic effect. Expression during log growth leads to significant disturbances of cell envelope biosynthesis and cell morphology, causing cell membrane invaginations and delocalization of cell division and cell wall synthesis machinery. Cell lysis depends on mreB, lytC and lytD, suggesting expression of bsrG triggers autolysis rather than disintegration of the membrane. Additionally expression of bsrG also inhibits transcription. This chain is Small toxic protein BsrG, found in Bacillus subtilis (strain 168).